The primary structure comprises 84 residues: Toxin Ts4 (84 aa).

An N-terminal signal peptide occupies residues 1–19; the sequence is MKRMILFISCLLLIDIVVG. The LCN-type CS-alpha/beta domain occupies 21 to 82; that stretch reads REGYPADSKG…IWTSETNKCG (62 aa). 4 disulfides stabilise this stretch: Cys-31-Cys-81, Cys-35-Cys-57, Cys-43-Cys-62, and Cys-47-Cys-64. A Cysteine amide modification is found at Cys-81. Positions 82–84 are excised as a propeptide; the sequence is GKK.

Belongs to the long (4 C-C) scorpion toxin superfamily. Sodium channel inhibitor family. Alpha subfamily. As to expression, expressed by the venom gland.

It is found in the secreted. Functionally, not toxic. Induces an immune response similar to that induced by whole venom. Induces a dose dependent release of the neurotransmitters glutamic acid and gamma aminobutyric acid from rat brain synaptosomes. Thus, polyclonal antibodies raised against this protein can neutralize the effects of the venom. This chain is Toxin Ts4, found in Tityus serrulatus (Brazilian scorpion).